A 211-amino-acid chain; its full sequence is Regulator of G-protein signaling 2 (211 aa).

The necessary for membrane association stretch occupies residues 32 to 66 (KMKRTLLKDWKTRLSYFLQNSSAPGKPKTGKKSKQ). The interval 79–116 (LWAEAFDELLASKYGLAAFRAFLKSEFCEENIEFWLAC) is necessary to inhibit protein synthesis. The RGS domain occupies 83-199 (AFDELLASKY…LESEFYQDLC (117 aa)).

In terms of assembly, interacts with GNAQ. Does not interact with GNAI1 and GNAI3. Interacts with EIF2B5. Interacts with PRKG1 (isoform alpha). In terms of processing, phosphorylated by protein kinase C. Phosphorylation by PRKG1 leads to activation of RGS2 activity. Expressed in a wide variety of tissues.

It localises to the cell membrane. It is found in the cytoplasm. Its subcellular location is the nucleus. The protein resides in the nucleolus. Regulates G protein-coupled receptor signaling cascades. Inhibits signal transduction by increasing the GTPase activity of G protein alpha subunits, thereby driving them into their inactive GDP-bound form. It is involved in the negative regulation of the angiotensin-activated signaling pathway. Plays a role in the regulation of blood pressure in response to signaling via G protein-coupled receptors and GNAQ. Plays a role in regulating the constriction and relaxation of vascular smooth muscle. Binds EIF2B5 and blocks its activity, thereby inhibiting the translation of mRNA into protein. The protein is Regulator of G-protein signaling 2 (Rgs2) of Mus musculus (Mouse).